We begin with the raw amino-acid sequence, 582 residues long: Trans-ocimene synthase, chloroplastic (582 aa).

A chloroplast-targeting transit peptide spans 1–35 (MSLIIQSLPHWSRIPPRPPQLSQFQNSSRPKPLIQ). (2E)-geranyl diphosphate contacts are provided by R296, D333, D337, R474, and D477. The Mg(2+) site is built by D333 and D337. The short motif at 333–337 (DDIYD) is the DDXXD motif element. Residues D477, T481, and E485 each contribute to the Mg(2+) site.

The protein belongs to the terpene synthase family. Tpsb subfamily. In terms of assembly, monomer. Requires Mg(2+) as cofactor. The cofactor is Mn(2+). Expressed in male and female leaves. Barely detectable in fruits and shoots.

The protein localises to the plastid. It localises to the chloroplast. It catalyses the reaction (2E)-geranyl diphosphate = (E)-beta-ocimene + diphosphate. The protein operates within secondary metabolite biosynthesis; terpenoid biosynthesis. Its function is as follows. Monoterpene synthase (TPS) involved in the biosynthesis of monoterpene natural products used by traditional Chinese medicine to treat headache, inflammation and intoxication. Catalyzes the conversion of (2E)-geranyl diphosphate (GPP) into (E)-beta-ocimene. The protein is Trans-ocimene synthase, chloroplastic of Litsea cubeba (Aromatic litsea).